A 264-amino-acid chain; its full sequence is Glutamate racemase (264 aa).

Substrate contacts are provided by residues 12 to 13 (DS) and 44 to 45 (YG). The active-site Proton donor/acceptor is the Cys-76. 77–78 (NT) contacts substrate. Cys-186 acts as the Proton donor/acceptor in catalysis. 187 to 188 (TH) contributes to the substrate binding site.

This sequence belongs to the aspartate/glutamate racemases family.

It catalyses the reaction L-glutamate = D-glutamate. It participates in cell wall biogenesis; peptidoglycan biosynthesis. Its function is as follows. Provides the (R)-glutamate required for cell wall biosynthesis. This is Glutamate racemase from Fusobacterium nucleatum subsp. nucleatum (strain ATCC 25586 / DSM 15643 / BCRC 10681 / CIP 101130 / JCM 8532 / KCTC 2640 / LMG 13131 / VPI 4355).